A 180-amino-acid polypeptide reads, in one-letter code: MKGGKRVQTARPNRINSEIRAQEVRLTGLEGEQLGIVSLREALEKAEEAGVDLVEISPNAEPPVCRIMDYGKFLYEKSKSSKEQKKKQKVIQVKEIKFRPGTDEGDYQVKLRSLIRFLEEGDKAKITLRFRGREMAHQQIGMEVLNRVKDDLQELAVVESFPTKIEGRQMIMVLAPKKKQ.

It belongs to the IF-3 family. In terms of assembly, monomer.

It is found in the cytoplasm. In terms of biological role, IF-3 binds to the 30S ribosomal subunit and shifts the equilibrium between 70S ribosomes and their 50S and 30S subunits in favor of the free subunits, thus enhancing the availability of 30S subunits on which protein synthesis initiation begins. This chain is Translation initiation factor IF-3, found in Salmonella typhimurium (strain LT2 / SGSC1412 / ATCC 700720).